Consider the following 177-residue polypeptide: R-phycoerythrin beta chain (177 aa).

Phycourobilin contacts are provided by Cys50 and Cys61. At Asn72 the chain carries N4-methylasparagine. Cys82 and Cys158 together coordinate (2R,3E)-phycoerythrobilin.

It belongs to the phycobiliprotein family. In terms of assembly, heterodimer of an alpha and a beta chain. Post-translationally, contains two covalently linked phycoerythrobilin chromophores and one covalently linked phycourobilin chromophore.

The protein resides in the plastid. Its subcellular location is the chloroplast thylakoid membrane. Its function is as follows. Light-harvesting photosynthetic bile pigment-protein from the phycobiliprotein complex. This chain is R-phycoerythrin beta chain (cpeB), found in Porphyra purpurea (Red seaweed).